The primary structure comprises 453 residues: Aryl hydrocarbon receptor nuclear translocator homolog (453 aa).

Positions 44-97 constitute a bHLH domain; that stretch reads FARENHSEIERRRRNKMTHYINELAEMVPQCASLGRKPDKLTILRMAVSHMKGI. PAS domains lie at 115-193 and 277-347; these read DQEL…LDLK and ASMP…LSDQ. Residues 348–392 form the PAC domain; that stretch reads PMRINIRVRTSTDYIPCTVSAYKFMNPYSEQFEYVVATHQIAPQE. The tract at residues 410 to 453 is disordered; the sequence is EFGELGGAPSAVDYGQSSSGGWRPEAQGAPQAQWQWDPMNGYNQ.

As to quaternary structure, interacts with hif-1. Heterodimer; efficient DNA binding requires dimerization with another bHLH protein. Forms a heterodimer with ahr-1; binds DNA as heterodimer. Forms a heterodimer with PAS domain-containing protein cky-1; binds DNA as heterodimer. Expressed in many cell types throughout development, including hypodermal cells, intestinal cells, pharyngeal cells, and neurons. Expressed in every cell during embryo.

The protein localises to the nucleus. Functionally, transcription factor. Efficient DNA binding requires dimerization with another bHLH protein, such as cky-1 or ahr-1. Regulates transcription of target genes, probably acting in complex with cky-1. Has a role in cellular differentiation. Required for pharyngeal development. In collaboration with ahr-1 it is involved in RMEL/R and SDQR neuron cell migration. Acts in the cellular response to hypoxia. Involved in aggregation behavior by regulating soluble guanylate cyclase gene expression in the URX neurons. This is Aryl hydrocarbon receptor nuclear translocator homolog from Caenorhabditis elegans.